A 138-amino-acid polypeptide reads, in one-letter code: MSLLQPRKVKWRKPQKGRTKGKATRRNQVDFGEYGLQALEPGRLTSRQIEAARIAIVREAKKGAKVWIRVFPHKPVTKKPAETRMGKGKGDLDHYEAIVKPGHILFELAGVPEEVAAEAFRKAGHKLPIKTRLVKSVE.

Residues Met-1 to Val-29 are disordered. Over residues Arg-7–Arg-25 the composition is skewed to basic residues.

It belongs to the universal ribosomal protein uL16 family. Part of the 50S ribosomal subunit.

In terms of biological role, binds 23S rRNA and is also seen to make contacts with the A and possibly P site tRNAs. This is Large ribosomal subunit protein uL16 from Sulfurihydrogenibium sp. (strain YO3AOP1).